Consider the following 750-residue polypeptide: 5-methyltetrahydropteroyltriglutamate--homocysteine methyltransferase (750 aa).

5-methyltetrahydropteroyltri-L-glutamate-binding positions include 15 to 18 (RELK) and Lys-114. Residues 425–427 (IGS) and Glu-478 contribute to the L-homocysteine site. Residues 425–427 (IGS) and Glu-478 contribute to the L-methionine site. Residue Trp-555 coordinates 5-methyltetrahydropteroyltri-L-glutamate. Position 593 (Asp-593) interacts with L-homocysteine. Asp-593 lines the L-methionine pocket. Glu-599 contacts 5-methyltetrahydropteroyltri-L-glutamate. 3 residues coordinate Zn(2+): His-636, Cys-638, and Glu-660. Residue His-689 is the Proton donor of the active site. Position 721 (Cys-721) interacts with Zn(2+).

It belongs to the vitamin-B12 independent methionine synthase family. Zn(2+) serves as cofactor.

It catalyses the reaction 5-methyltetrahydropteroyltri-L-glutamate + L-homocysteine = tetrahydropteroyltri-L-glutamate + L-methionine. It functions in the pathway amino-acid biosynthesis; L-methionine biosynthesis via de novo pathway; L-methionine from L-homocysteine (MetE route): step 1/1. In terms of biological role, catalyzes the transfer of a methyl group from 5-methyltetrahydrofolate to homocysteine resulting in methionine formation. This is 5-methyltetrahydropteroyltriglutamate--homocysteine methyltransferase from Streptococcus sanguinis (strain SK36).